The following is a 315-amino-acid chain: Energy-coupling factor transporter ATP-binding protein EcfA2 (315 aa).

Residues 31-275 form the ABC transporter domain; sequence IILDNVSYTY…QELLSKIQIE (245 aa). 68–75 provides a ligand contact to ATP; it reads GTTGSGKS.

It belongs to the ABC transporter superfamily. Energy-coupling factor EcfA family. As to quaternary structure, forms a stable energy-coupling factor (ECF) transporter complex composed of 2 membrane-embedded substrate-binding proteins (S component), 2 ATP-binding proteins (A component) and 2 transmembrane proteins (T component).

The protein resides in the cell membrane. Its function is as follows. ATP-binding (A) component of a common energy-coupling factor (ECF) ABC-transporter complex. Unlike classic ABC transporters this ECF transporter provides the energy necessary to transport a number of different substrates. The sequence is that of Energy-coupling factor transporter ATP-binding protein EcfA2 from Mesoplasma florum (strain ATCC 33453 / NBRC 100688 / NCTC 11704 / L1) (Acholeplasma florum).